A 146-amino-acid chain; its full sequence is D-aminoacyl-tRNA deacylase (146 aa).

The Gly-cisPro motif, important for rejection of L-amino acids motif lies at Gly137 to Pro138.

It belongs to the DTD family. As to quaternary structure, homodimer.

The protein resides in the cytoplasm. It catalyses the reaction glycyl-tRNA(Ala) + H2O = tRNA(Ala) + glycine + H(+). The enzyme catalyses a D-aminoacyl-tRNA + H2O = a tRNA + a D-alpha-amino acid + H(+). Its function is as follows. An aminoacyl-tRNA editing enzyme that deacylates mischarged D-aminoacyl-tRNAs. Also deacylates mischarged glycyl-tRNA(Ala), protecting cells against glycine mischarging by AlaRS. Acts via tRNA-based rather than protein-based catalysis; rejects L-amino acids rather than detecting D-amino acids in the active site. By recycling D-aminoacyl-tRNA to D-amino acids and free tRNA molecules, this enzyme counteracts the toxicity associated with the formation of D-aminoacyl-tRNA entities in vivo and helps enforce protein L-homochirality. The polypeptide is D-aminoacyl-tRNA deacylase (Psychrobacter sp. (strain PRwf-1)).